Consider the following 284-residue polypeptide: 2-dehydro-3-deoxyphosphooctonate aldolase (284 aa).

The protein belongs to the KdsA family.

It is found in the cytoplasm. It carries out the reaction D-arabinose 5-phosphate + phosphoenolpyruvate + H2O = 3-deoxy-alpha-D-manno-2-octulosonate-8-phosphate + phosphate. Its pathway is carbohydrate biosynthesis; 3-deoxy-D-manno-octulosonate biosynthesis; 3-deoxy-D-manno-octulosonate from D-ribulose 5-phosphate: step 2/3. It functions in the pathway bacterial outer membrane biogenesis; lipopolysaccharide biosynthesis. This is 2-dehydro-3-deoxyphosphooctonate aldolase from Escherichia coli O157:H7.